Here is a 699-residue protein sequence, read N- to C-terminus: Osmotic avoidance abnormal protein 3 (699 aa).

In terms of domain architecture, Kinesin motor spans 4-327 (SVRVAVRCRP…LRYANRAKNI (324 aa)). Position 87 to 94 (87 to 94 (GQTGSGKT)) interacts with ATP. A coiled-coil region spans residues 339-523 (DALLREYQEE…EIEDLHGEFE (185 aa)).

This sequence belongs to the TRAFAC class myosin-kinesin ATPase superfamily. Kinesin family. Kinesin II subfamily. Expressed in an exclusive set of 26 chemosensory neurons whose dendritic endings are exposed to the external environment; six IL2 neurons of the inner labial sensilla, 8 pairs of amphid neurons in the head, and 2 pairs of phasmid neurons in the tail.

Its subcellular location is the cytoplasm. The protein localises to the cytoskeleton. It localises to the cell projection. The protein resides in the cilium. It is found in the cilium axoneme. Its subcellular location is the cilium basal body. Functionally, kinesin motor protein which is required for the anterograde intraflagellar transport (IFT) along the middle segment of the sensory neuron cilia together with the kinesin II motor complex (composed of klp-11, klp-20 and kap-1) and on its own, is required for IFT along the distal segment. In addition, regulates the length of cilia. May have a role during neurogenesis and axonal transport. In Caenorhabditis elegans, this protein is Osmotic avoidance abnormal protein 3.